The following is a 106-amino-acid chain: Phosphoribosyl-ATP pyrophosphatase (106 aa).

Belongs to the PRA-PH family.

The protein localises to the cytoplasm. It carries out the reaction 1-(5-phospho-beta-D-ribosyl)-ATP + H2O = 1-(5-phospho-beta-D-ribosyl)-5'-AMP + diphosphate + H(+). Its pathway is amino-acid biosynthesis; L-histidine biosynthesis; L-histidine from 5-phospho-alpha-D-ribose 1-diphosphate: step 2/9. This chain is Phosphoribosyl-ATP pyrophosphatase, found in Lactiplantibacillus plantarum (strain ATCC BAA-793 / NCIMB 8826 / WCFS1) (Lactobacillus plantarum).